The sequence spans 409 residues: 3-isopropylmalate dehydrogenase 1, chloroplastic (409 aa).

Residues 1–37 constitute a chloroplast transit peptide; sequence MAAFLQTNISLNAIKIVPGKYSSLTDHQFRAPYRIRC. The residue at position 74 (S74) is a Phosphoserine. Residue 118-133 participates in NAD(+) binding; sequence IGGYKWDKNEKHLRPE. The substrate site is built by R140, R150, and R178. N238 provides a ligand contact to NAD(+). D268 lines the substrate pocket. Residue D268 participates in Mg(2+) binding. N269 contacts NAD(+). Residues D292 and D296 each contribute to the Mg(2+) site. 322–338 contributes to the NAD(+) binding site; that stretch reads EPIHGSAPDIAGQDKAN.

The protein belongs to the isocitrate and isopropylmalate dehydrogenases family. As to quaternary structure, homodimer. It depends on Mg(2+) as a cofactor. Mn(2+) is required as a cofactor. In terms of tissue distribution, highly expressed in seedlings, leaves, stems and roots and, to a lower extent, in flowers, pollen and siliques.

The protein resides in the plastid. It localises to the chloroplast stroma. The catalysed reaction is (2R,3S)-3-isopropylmalate + NAD(+) = 4-methyl-2-oxopentanoate + CO2 + NADH. It functions in the pathway amino-acid biosynthesis; L-leucine biosynthesis; L-leucine from 3-methyl-2-oxobutanoate: step 3/4. The protein operates within secondary metabolite biosynthesis. Regulated by a thiol-based redox modification; oxidation by CuCl(2) leads to a decreased activity. Involved in both glucosinolate and leucine biosynthesis; catalyzes the oxidative decarboxylation step in both leucine biosynthesis (primary metabolism) and methionine chain elongation of glucosinolates (specialized metabolism). Catalyzes the oxidation of 3-carboxy-2-hydroxy-4-methylpentanoate (3-isopropylmalate, 3-IPM) to 3-carboxy-4-methyl-2-oxopentanoate. The product decarboxylates to 4-methyl-2 oxopentanoate. Required during pollen development and involved in embryo sac development. More active on 3-isopropylmalate and NAD(+) than towards D-malate. This is 3-isopropylmalate dehydrogenase 1, chloroplastic from Arabidopsis thaliana (Mouse-ear cress).